The following is a 435-amino-acid chain: ATP-dependent RNA helicase RhlB (435 aa).

A Q motif motif is present at residues Gln9 to Ala37. The 180-residue stretch at Leu40–Val219 folds into the Helicase ATP-binding domain. Residue Ala53 to Thr60 coordinates ATP. Positions Asp165–Asp168 match the DEAD box motif. Positions Ala245–Ile390 constitute a Helicase C-terminal domain. Residues Ala395–Ala435 form a disordered region. Positions Ser401–Gly413 are enriched in polar residues. Basic residues predominate over residues Asn422–Ala435.

It belongs to the DEAD box helicase family. RhlB subfamily. In terms of assembly, component of the RNA degradosome, which is a multiprotein complex involved in RNA processing and mRNA degradation.

It is found in the cytoplasm. The catalysed reaction is ATP + H2O = ADP + phosphate + H(+). In terms of biological role, DEAD-box RNA helicase involved in RNA degradation. Has RNA-dependent ATPase activity and unwinds double-stranded RNA. The sequence is that of ATP-dependent RNA helicase RhlB from Vibrio vulnificus (strain CMCP6).